The chain runs to 1342 residues: DNA-directed RNA polymerase subunit beta (1342 aa).

It belongs to the RNA polymerase beta chain family. In terms of assembly, the RNAP catalytic core consists of 2 alpha, 1 beta, 1 beta' and 1 omega subunit. When a sigma factor is associated with the core the holoenzyme is formed, which can initiate transcription.

It carries out the reaction RNA(n) + a ribonucleoside 5'-triphosphate = RNA(n+1) + diphosphate. Functionally, DNA-dependent RNA polymerase catalyzes the transcription of DNA into RNA using the four ribonucleoside triphosphates as substrates. The chain is DNA-directed RNA polymerase subunit beta from Cronobacter sakazakii (strain ATCC BAA-894) (Enterobacter sakazakii).